The sequence spans 288 residues: Bifunctional protein FolD (288 aa).

NADP(+) contacts are provided by residues 166–168, Ser191, and Ile232; that span reads GRS.

Belongs to the tetrahydrofolate dehydrogenase/cyclohydrolase family. In terms of assembly, homodimer.

The enzyme catalyses (6R)-5,10-methylene-5,6,7,8-tetrahydrofolate + NADP(+) = (6R)-5,10-methenyltetrahydrofolate + NADPH. The catalysed reaction is (6R)-5,10-methenyltetrahydrofolate + H2O = (6R)-10-formyltetrahydrofolate + H(+). It functions in the pathway one-carbon metabolism; tetrahydrofolate interconversion. Functionally, catalyzes the oxidation of 5,10-methylenetetrahydrofolate to 5,10-methenyltetrahydrofolate and then the hydrolysis of 5,10-methenyltetrahydrofolate to 10-formyltetrahydrofolate. This is Bifunctional protein FolD from Rickettsia africae (strain ESF-5).